Consider the following 365-residue polypeptide: Isopentenyl-diphosphate delta-isomerase (365 aa).

Residue 8-9 (RK) coordinates substrate. FMN-binding positions include 67–69 (SIT), Ser-97, and Asn-126. 97-99 (SQR) serves as a coordination point for substrate. Gln-160 is a binding site for substrate. Glu-161 contributes to the Mg(2+) binding site. FMN is bound by residues Lys-192, Thr-222, 272-274 (GIR), and 293-294 (AL).

Belongs to the IPP isomerase type 2 family. As to quaternary structure, homooctamer. Dimer of tetramers. FMN serves as cofactor. Requires NADPH as cofactor. It depends on Mg(2+) as a cofactor.

It localises to the cytoplasm. It catalyses the reaction isopentenyl diphosphate = dimethylallyl diphosphate. In terms of biological role, involved in the biosynthesis of isoprenoids. Catalyzes the 1,3-allylic rearrangement of the homoallylic substrate isopentenyl (IPP) to its allylic isomer, dimethylallyl diphosphate (DMAPP). The sequence is that of Isopentenyl-diphosphate delta-isomerase from Methanosarcina barkeri (strain Fusaro / DSM 804).